Here is a 440-residue protein sequence, read N- to C-terminus: MDLTNWWQGATQWFGRSSQKSLEQAFRSALKIKEIEDQYFQGKKIGPENCDYSADTVTYFANQIQRHLRKIEQEIYHLNSDQEFVKILSLDPAVKQDPQTEYVLNQLQFIDDILQRYDGELPQVSPPKQIANGGVLDLPAITANKQRQINKKRRDGFQYIRREDTQQKVDTATQKSGVLPRSFLRTIDRLKREMDPQSSDTEQKVLKQYRNSRYKTALSIKFVLTLIIVPLLAHQLTKTFFLLPSVESFFERNSEVVFINQSMETEAYEELSHFEESLRFRELLGFGEKLSPEAKEEKLAEKAKEISESYRRVSTNAIANIFADIFSLVAFSLVLVNSQREIEVLKEFIDEIVYGLSDSAKAFLIILFTDMFVGFHSPHGWEVILASIARHFGLPENQDFNFLFIATFPVILDTVFKYWIFRYLNSISPSAVATYRNMNE.

4 helical membrane-spanning segments follow: residues 222–242 (FVLT…TFFL), 316–336 (NAIA…LVLV), 352–374 (IVYG…MFVG), and 400–420 (FNFL…KYWI).

This sequence belongs to the CemA family.

Its subcellular location is the cell inner membrane. Functionally, required for H(+) efflux immediately after light irradiation to form a rapid H(+) concentration gradient across the thylakoid membranes. Together with PxcL, contributes to transient H(+) uptake following dark to light transition. Involved in light-induced Na(+)-dependent proton extrusion. Also seems to be involved in CO(2) transport. The polypeptide is Proton extrusion protein PxcA (Synechocystis sp. (strain ATCC 27184 / PCC 6803 / Kazusa)).